The primary structure comprises 1164 residues: DNA-directed RNA polymerase 132 kDa polypeptide (1164 aa).

It belongs to the RNA polymerase beta chain family. In terms of assembly, the DNA-dependent RNA polymerase used for intermediate and late genes expression consists of eight subunits (147) kDa, (133) kDa, (35) kDa, (30) kDa, (22) kDa, (19) kDa, (18) kDa and (7) kDa totalling more than 500 kDa in mass. The same holoenzyme, with the addition of the transcription-specificity factor RAP94, is used for early gene expression.

It localises to the virion. It carries out the reaction RNA(n) + a ribonucleoside 5'-triphosphate = RNA(n+1) + diphosphate. In terms of biological role, part of the DNA-dependent RNA polymerase which catalyzes the transcription of viral DNA into RNA using the four ribonucleoside triphosphates as substrates. Responsible for the transcription of early, intermediate and late genes. DNA-dependent RNA polymerase associates with the early transcription factor (ETF), itself composed of D6 and A7, thereby allowing the early genes transcription. Late transcription, and probably also intermediate transcription, require newly synthesized RNA polymerase. The protein is DNA-directed RNA polymerase 132 kDa polypeptide (RPO132) of Mus musculus (Mouse).